Consider the following 256-residue polypeptide: Nuclear shuttle protein (256 aa).

The segment at 18-50 (VSRNQSSKRGTFVRRTDGKRRKGPSSKAHDEPK) is disordered. The Bipartite nuclear localization signal signature appears at 21–42 (NQSSKRGTFVRRTDGKRRKGPS). A Nuclear localization signal motif is present at residues 81–96 (VLGKIEPNRSRSYIKL). Residues 150–187 (EIFGARIHSHGNLAITPGLKDRYYVLHVLKRVLSVEKD) form an interaction with Arabidopsis thaliana NSI protein region.

Belongs to the begomovirus nuclear shuttle protein family. Binds to single-stranded and double-stranded viral DNA. Interacts with the host nuclear shuttle interacting (NSI) protein. This interaction may allow NSP to recruit NSI monomers to the viral genome and thus regulate nuclear export of viral genome by NSP.

It is found in the host nucleus. The protein resides in the host cytoplasm. Its subcellular location is the host cell membrane. Functionally, binds to the genomic viral ssDNA, shuttles it into and out of the cell nucleus. Begomoviruses use 2 proteins to transport their DNA from cell to cell. The nuclear shuttle protein (NSP) shuttles it between nucleus and cytoplasm and the movement protein (MP) probably transports the DNA-NSP complex to the cell periphery and facilitates movement across the cell wall. The sequence is that of Nuclear shuttle protein from Brassica oleracea (Wild cabbage).